Reading from the N-terminus, the 264-residue chain is Acyl-[acyl-carrier-protein]--UDP-N-acetylglucosamine O-acyltransferase (264 aa).

Belongs to the transferase hexapeptide repeat family. LpxA subfamily. As to quaternary structure, homotrimer.

The protein localises to the cytoplasm. The enzyme catalyses a (3R)-hydroxyacyl-[ACP] + UDP-N-acetyl-alpha-D-glucosamine = a UDP-3-O-[(3R)-3-hydroxyacyl]-N-acetyl-alpha-D-glucosamine + holo-[ACP]. The protein operates within glycolipid biosynthesis; lipid IV(A) biosynthesis; lipid IV(A) from (3R)-3-hydroxytetradecanoyl-[acyl-carrier-protein] and UDP-N-acetyl-alpha-D-glucosamine: step 1/6. In terms of biological role, involved in the biosynthesis of lipid A, a phosphorylated glycolipid that anchors the lipopolysaccharide to the outer membrane of the cell. In Rickettsia africae (strain ESF-5), this protein is Acyl-[acyl-carrier-protein]--UDP-N-acetylglucosamine O-acyltransferase.